Consider the following 179-residue polypeptide: Acireductone dioxygenase (179 aa).

Fe(2+) is bound by residues H100, H102, E106, and H145. Residues H100, H102, E106, and H145 each coordinate Ni(2+).

Belongs to the acireductone dioxygenase (ARD) family. As to quaternary structure, monomer. It depends on Fe(2+) as a cofactor. Requires Ni(2+) as cofactor.

The enzyme catalyses 1,2-dihydroxy-5-(methylsulfanyl)pent-1-en-3-one + O2 = 3-(methylsulfanyl)propanoate + CO + formate + 2 H(+). It carries out the reaction 1,2-dihydroxy-5-(methylsulfanyl)pent-1-en-3-one + O2 = 4-methylsulfanyl-2-oxobutanoate + formate + 2 H(+). It functions in the pathway amino-acid biosynthesis; L-methionine biosynthesis via salvage pathway; L-methionine from S-methyl-5-thio-alpha-D-ribose 1-phosphate: step 5/6. Its function is as follows. Catalyzes 2 different reactions between oxygen and the acireductone 1,2-dihydroxy-3-keto-5-methylthiopentene (DHK-MTPene) depending upon the metal bound in the active site. Fe-containing acireductone dioxygenase (Fe-ARD) produces formate and 2-keto-4-methylthiobutyrate (KMTB), the alpha-ketoacid precursor of methionine in the methionine recycle pathway. Ni-containing acireductone dioxygenase (Ni-ARD) produces methylthiopropionate, carbon monoxide and formate, and does not lie on the methionine recycle pathway. In Bacillus licheniformis (strain ATCC 14580 / DSM 13 / JCM 2505 / CCUG 7422 / NBRC 12200 / NCIMB 9375 / NCTC 10341 / NRRL NRS-1264 / Gibson 46), this protein is Acireductone dioxygenase.